Reading from the N-terminus, the 568-residue chain is Arginine--tRNA ligase (568 aa).

The 'HIGH' region signature appears at 129–139; the sequence is ANPTGPLHIGH.

The protein belongs to the class-I aminoacyl-tRNA synthetase family. Monomer.

It localises to the cytoplasm. It carries out the reaction tRNA(Arg) + L-arginine + ATP = L-arginyl-tRNA(Arg) + AMP + diphosphate. This Wolbachia pipientis wMel protein is Arginine--tRNA ligase.